The chain runs to 196 residues: GTP cyclohydrolase 1 (196 aa).

Cys-86, His-89, and Cys-157 together coordinate Zn(2+).

Belongs to the GTP cyclohydrolase I family. In terms of assembly, toroid-shaped homodecamer, composed of two pentamers of five dimers.

It carries out the reaction GTP + H2O = 7,8-dihydroneopterin 3'-triphosphate + formate + H(+). The protein operates within cofactor biosynthesis; 7,8-dihydroneopterin triphosphate biosynthesis; 7,8-dihydroneopterin triphosphate from GTP: step 1/1. The chain is GTP cyclohydrolase 1 from Parabacteroides distasonis (strain ATCC 8503 / DSM 20701 / CIP 104284 / JCM 5825 / NCTC 11152).